The chain runs to 342 residues: MSGMHDFLFNTNLGLLIITALQALAILVPLMLMVAYATVFERKVLAAIGLRKGPNVVGPWGMLQAFADAGKMLLKETIIPDGANKVLFILAPLLTFILAMIAWAVVPVNDGWAVANINVGVLYLFAISSLGVYGVIIAGWASNSKYAFLGALRAAAQMVSYEVSIGFVMVAILLCVGSLNLNDVVLAQKHVWFVLPMLPMAVIFFISGLAETNRSPFDIVEGESEIVAGHMVEYSAMAYALFFLGEYANMFMICAMTTLLFLGGWLPPFDIVPLNWVPGPIWFVLKVCALMFVFFWVRGTVPRYRYDQLMRLGWKVFLPFSLVWLLLTACVLELAGWLPTVN.

Transmembrane regions (helical) follow at residues 15–35 (LLIITALQALAILVPLMLMVA), 86–106 (VLFILAPLLTFILAMIAWAVV), 119–139 (VGVLYLFAISSLGVYGVIIAG), 159–179 (VSYEVSIGFVMVAILLCVGSL), 190–210 (HVWFVLPMLPMAVIFFISGLA), 251–271 (FMICAMTTLLFLGGWLPPFDI), 277–297 (VPGPIWFVLKVCALMFVFFWV), and 316–336 (VFLPFSLVWLLLTACVLELAG).

Belongs to the complex I subunit 1 family. In terms of assembly, NDH-1 is composed of 14 different subunits. Subunits NuoA, H, J, K, L, M, N constitute the membrane sector of the complex.

The protein localises to the cell inner membrane. It carries out the reaction a quinone + NADH + 5 H(+)(in) = a quinol + NAD(+) + 4 H(+)(out). Its function is as follows. NDH-1 shuttles electrons from NADH, via FMN and iron-sulfur (Fe-S) centers, to quinones in the respiratory chain. The immediate electron acceptor for the enzyme in this species is believed to be ubiquinone. Couples the redox reaction to proton translocation (for every two electrons transferred, four hydrogen ions are translocated across the cytoplasmic membrane), and thus conserves the redox energy in a proton gradient. This subunit may bind ubiquinone. In Granulibacter bethesdensis (strain ATCC BAA-1260 / CGDNIH1), this protein is NADH-quinone oxidoreductase subunit H.